We begin with the raw amino-acid sequence, 167 residues long: Anaerobic nitrite reductase NSHB4 (167 aa).

The Globin domain occupies 12-162; that stretch reads RFTEEQEALV…LVAAIKEGMK (151 aa). The Homodimerization motif lies at 45–49; the sequence is EVAPS. Ser-55, His-73, Arg-103, Thr-107, and His-108 together coordinate heme b. Positions 115–127 match the Homodimerization motif; it reads DTHFEVARFALLE.

Belongs to the plant globin family. Homodimer. It depends on heme b as a cofactor.

Its subcellular location is the cytoplasm. It localises to the nucleus. The enzyme catalyses Fe(III)-heme b-[protein] + nitric oxide + H2O = Fe(II)-heme b-[protein] + nitrite + 2 H(+). Functionally, phytoglobin that reduces nitrite to nitric oxide under anoxic conditions (e.g. during flooding or in waterlogged soil). May not function as an oxygen storage or transport protein. Has an unusually high affinity for O(2) through an hexacoordinate heme iron because of a very low dissociation constant. This chain is Anaerobic nitrite reductase NSHB4, found in Oryza sativa subsp. indica (Rice).